The primary structure comprises 503 residues: ATP synthase subunit alpha (503 aa).

169-176 lines the ATP pocket; it reads GDRKTGKT.

This sequence belongs to the ATPase alpha/beta chains family. As to quaternary structure, F-type ATPases have 2 components, CF(1) - the catalytic core - and CF(0) - the membrane proton channel. CF(1) has five subunits: alpha(3), beta(3), gamma(1), delta(1), epsilon(1). CF(0) has three main subunits: a(1), b(2) and c(9-12). The alpha and beta chains form an alternating ring which encloses part of the gamma chain. CF(1) is attached to CF(0) by a central stalk formed by the gamma and epsilon chains, while a peripheral stalk is formed by the delta and b chains.

Its subcellular location is the cell membrane. It catalyses the reaction ATP + H2O + 4 H(+)(in) = ADP + phosphate + 5 H(+)(out). Functionally, produces ATP from ADP in the presence of a proton gradient across the membrane. The alpha chain is a regulatory subunit. This is ATP synthase subunit alpha from Ligilactobacillus salivarius (strain UCC118) (Lactobacillus salivarius).